A 114-amino-acid chain; its full sequence is T cell receptor beta variable 6-1 (114 aa).

An N-terminal signal peptide occupies residues 1-21 (MSIGLLCCVAFSLLWASPVNA). The region spanning 22 to 114 (GVTQTPKFQV…TSVYFCASSE (93 aa)) is the Ig-like domain. A disulfide bridge links Cys42 with Cys110. The N-linked (GlcNAc...) asparagine glycan is linked to Asn84.

In terms of assembly, alpha-beta TR is a heterodimer composed of an alpha and beta chain; disulfide-linked. The alpha-beta TR is associated with the transmembrane signaling CD3 coreceptor proteins to form the TR-CD3 (TcR or TCR). The assembly of alpha-beta TR heterodimers with CD3 occurs in the endoplasmic reticulum where a single alpha-beta TR heterodimer associates with one CD3D-CD3E heterodimer, one CD3G-CD3E heterodimer and one CD247 homodimer forming a stable octameric structure. CD3D-CD3E and CD3G-CD3E heterodimers preferentially associate with TR alpha and TR beta chains, respectively. The association of the CD247 homodimer is the last step of TcR assembly in the endoplasmic reticulum and is required for transport to the cell surface.

The protein localises to the cell membrane. In terms of biological role, v region of the variable domain of T cell receptor (TR) beta chain that participates in the antigen recognition. Alpha-beta T cell receptors are antigen specific receptors which are essential to the immune response and are present on the cell surface of T lymphocytes. Recognize peptide-major histocompatibility (MH) (pMH) complexes that are displayed by antigen presenting cells (APC), a prerequisite for efficient T cell adaptive immunity against pathogens. Binding of alpha-beta TR to pMH complex initiates TR-CD3 clustering on the cell surface and intracellular activation of LCK that phosphorylates the ITAM motifs of CD3G, CD3D, CD3E and CD247 enabling the recruitment of ZAP70. In turn ZAP70 phosphorylates LAT, which recruits numerous signaling molecules to form the LAT signalosome. The LAT signalosome propagates signal branching to three major signaling pathways, the calcium, the mitogen-activated protein kinase (MAPK) kinase and the nuclear factor NF-kappa-B (NF-kB) pathways, leading to the mobilization of transcription factors that are critical for gene expression and essential for T cell growth and differentiation. The T cell repertoire is generated in the thymus, by V-(D)-J rearrangement. This repertoire is then shaped by intrathymic selection events to generate a peripheral T cell pool of self-MH restricted, non-autoaggressive T cells. Post-thymic interaction of alpha-beta TR with the pMH complexes shapes TR structural and functional avidity. The protein is T cell receptor beta variable 6-1 of Homo sapiens (Human).